A 60-amino-acid chain; its full sequence is Mastoparan-VT3 (60 aa).

The first 27 residues, 1–27 (MKNTILILFTAFIALLGFFGMSAEALA), serve as a signal peptide directing secretion. AXPX repeat units follow at residues 27 to 30 (ADPK), 31 to 34 (ADPL), 35 to 38 (AGPN), and 41 to 44 (ADPE). A propeptide spanning residues 28–45 (DPKADPLAGPNPDADPEA) is cleaved from the precursor. Leu-59 carries the post-translational modification Leucine amide.

The protein belongs to the MCD family. Mastoparan subfamily. In terms of tissue distribution, expressed by the venom gland.

The protein localises to the secreted. The synthetic peptide shows antimicrobial activities against Gram-negative bacteria (but not against all strains tested), Gram-positive bacteria (all strains tested) and the fungi C.albicans and C.parapsilosis. Exhibits moderate hemolytic activity (25% at 100 ug/ml) against washed human erythrocytes. This chain is Mastoparan-VT3, found in Vespa tropica (Greater banded hornet).